The sequence spans 133 residues: uncharacterized protein (133 aa).

The interval 82–133 is disordered; sequence KIKSYSPSRSQKALNNPSKIRTKQTNNDTTIQQSNNTTSTNTKPSSNTNTQQ. A compositionally biased stretch (polar residues) spans 86 to 100; sequence YSPSRSQKALNNPSK. Residues 105–133 show a composition bias toward low complexity; sequence QTNNDTTIQQSNNTTSTNTKPSSNTNTQQ.

This is an uncharacterized protein from Acidianus convivator (ABV).